The primary structure comprises 272 residues: 3-methyl-2-oxobutanoate hydroxymethyltransferase (272 aa).

D54 and D93 together coordinate Mg(2+). Residues 54–55 (DS), D93, and K121 contribute to the 3-methyl-2-oxobutanoate site. Position 123 (E123) interacts with Mg(2+). E190 acts as the Proton acceptor in catalysis.

This sequence belongs to the PanB family. As to quaternary structure, homodecamer; pentamer of dimers. Mg(2+) serves as cofactor.

It is found in the cytoplasm. It catalyses the reaction 3-methyl-2-oxobutanoate + (6R)-5,10-methylene-5,6,7,8-tetrahydrofolate + H2O = 2-dehydropantoate + (6S)-5,6,7,8-tetrahydrofolate. It participates in cofactor biosynthesis; (R)-pantothenate biosynthesis; (R)-pantoate from 3-methyl-2-oxobutanoate: step 1/2. Catalyzes the reversible reaction in which hydroxymethyl group from 5,10-methylenetetrahydrofolate is transferred onto alpha-ketoisovalerate to form ketopantoate. The chain is 3-methyl-2-oxobutanoate hydroxymethyltransferase from Janthinobacterium sp. (strain Marseille) (Minibacterium massiliensis).